The primary structure comprises 354 residues: 3-dehydroquinate synthase (354 aa).

NAD(+)-binding positions include 66–71 (DGERYK), 100–104 (GVVGD), 124–125 (TT), Lys137, and Lys146. Positions 179, 242, and 259 each coordinate Zn(2+).

The protein belongs to the sugar phosphate cyclases superfamily. Dehydroquinate synthase family. Co(2+) serves as cofactor. It depends on Zn(2+) as a cofactor. NAD(+) is required as a cofactor.

The protein localises to the cytoplasm. It catalyses the reaction 7-phospho-2-dehydro-3-deoxy-D-arabino-heptonate = 3-dehydroquinate + phosphate. Its pathway is metabolic intermediate biosynthesis; chorismate biosynthesis; chorismate from D-erythrose 4-phosphate and phosphoenolpyruvate: step 2/7. Functionally, catalyzes the conversion of 3-deoxy-D-arabino-heptulosonate 7-phosphate (DAHP) to dehydroquinate (DHQ). The chain is 3-dehydroquinate synthase from Halorhodospira halophila (strain DSM 244 / SL1) (Ectothiorhodospira halophila (strain DSM 244 / SL1)).